The sequence spans 1299 residues: DNA-directed RNA polymerase subunit beta' (1299 aa).

4 residues coordinate Zn(2+): C60, C62, C75, and C78. Positions 188-209 (GAKSDQKRRAKDGAEKEMGQTR) are disordered. Mg(2+) contacts are provided by D535, D537, and D539. Zn(2+) is bound by residues C882, C959, C966, and C969.

Belongs to the RNA polymerase beta' chain family. As to quaternary structure, the RNAP catalytic core consists of 2 alpha, 1 beta, 1 beta' and 1 omega subunit. When a sigma factor is associated with the core the holoenzyme is formed, which can initiate transcription. It depends on Mg(2+) as a cofactor. Zn(2+) serves as cofactor.

It catalyses the reaction RNA(n) + a ribonucleoside 5'-triphosphate = RNA(n+1) + diphosphate. Functionally, DNA-dependent RNA polymerase catalyzes the transcription of DNA into RNA using the four ribonucleoside triphosphates as substrates. This Clavibacter sepedonicus (Clavibacter michiganensis subsp. sepedonicus) protein is DNA-directed RNA polymerase subunit beta'.